Reading from the N-terminus, the 351-residue chain is Photosystem II D2 protein (351 aa).

A helical membrane pass occupies residues 39–59 (CSYLALGAWFTGTTFVTSWYT). A chlorophyll a-binding site is contributed by histidine 116. Residues 123–139 (GFCLRQFEIARLVGIRP) form a helical membrane-spanning segment. Residues glutamine 128 and asparagine 141 each coordinate pheophytin a. Residues 151–164 (VFVSVFLIYPLGQA) traverse the membrane as a helical segment. Residue histidine 196 coordinates chlorophyll a. Residues 206-226 (GALLCAIHGATVENTLFEDGE) traverse the membrane as a helical segment. A plastoquinone is bound by residues histidine 213 and phenylalanine 260. Histidine 213 is a Fe cation binding site. Histidine 267 is a binding site for Fe cation. Residues 277–293 (GLWTSSIGIIGLALNLR) form a helical membrane-spanning segment.

The protein belongs to the reaction center PufL/M/PsbA/D family. In terms of assembly, PSII is composed of 1 copy each of membrane proteins PsbA, PsbB, PsbC, PsbD, PsbE, PsbF, PsbH, PsbI, PsbJ, PsbK, PsbL, PsbM, PsbT, PsbY, PsbZ, Psb30/Ycf12, at least 3 peripheral proteins of the oxygen-evolving complex and a large number of cofactors. It forms dimeric complexes. It depends on The D1/D2 heterodimer binds P680, chlorophylls that are the primary electron donor of PSII, and subsequent electron acceptors. It shares a non-heme iron and each subunit binds pheophytin, quinone, additional chlorophylls, carotenoids and lipids. There is also a Cl(-1) ion associated with D1 and D2, which is required for oxygen evolution. The PSII complex binds additional chlorophylls, carotenoids and specific lipids. as a cofactor.

It localises to the plastid. It is found in the chloroplast thylakoid membrane. The enzyme catalyses 2 a plastoquinone + 4 hnu + 2 H2O = 2 a plastoquinol + O2. Photosystem II (PSII) is a light-driven water:plastoquinone oxidoreductase that uses light energy to abstract electrons from H(2)O, generating O(2) and a proton gradient subsequently used for ATP formation. It consists of a core antenna complex that captures photons, and an electron transfer chain that converts photonic excitation into a charge separation. The D1/D2 (PsbA/PsbD) reaction center heterodimer binds P680, the primary electron donor of PSII as well as several subsequent electron acceptors. D2 is needed for assembly of a stable PSII complex. The polypeptide is Photosystem II D2 protein (Galdieria sulphuraria (Red alga)).